Consider the following 412-residue polypeptide: Interferon-inducible GTPase 5 (412 aa).

Residues 51–234 enclose the IRG-type G domain; that stretch reads TRLEVGVTGE…PMLVTTWEHD (184 aa). GTP-binding positions include 60–67, 85–89, and 215–217; these read ESGAGKSS, TGVVE, and SNL. 2 positions are modified to phosphoserine: serine 246 and serine 303.

This sequence belongs to the TRAFAC class dynamin-like GTPase superfamily. IRG family. In terms of assembly, interacts with PLIN2/ADRP and COX4I1/COXIV. In terms of tissue distribution, expressed in spermatozoa tails from the testis and epididymis, where it may be a component of the fibrous sheath (at protein level).

The protein localises to the cell projection. The protein resides in the cilium. It localises to the flagellum. It is found in the lipid droplet. The catalysed reaction is GTP + H2O = GDP + phosphate + H(+). Functionally, required for sperm motility and therefore male fertility, via positive regulation of spermatozoa fibrous sheath formation. In Mus musculus (Mouse), this protein is Interferon-inducible GTPase 5.